The primary structure comprises 942 residues: MTHRDSTGPVIGLKLVTLLFTLSPELLFLGAGLKLKENGYDGLLVAINPRVPEDLKLITNIKEMITEASFYLFNATKRRVFFRNVQILVPATWTDHNYSRVRQESYDKANVIVAEQSEEHGDDPYTLQHRGCGQEGRYIHFTPSFLLNDELAAGYGARGRVFVHEWAHLRWGVFDEYNNDKPFYVNGRNEIQVTRCSSDITGVFVCEKGLCPHEDCIISKIFREGCTFLYNSTQNATGSIMFMPSLPSVVEFCNESTHNQEAPNLQNQVCSLRSTWDVITASSDLNHSLPVHGVGLPAPPTFSLLQAGDRVVCLVIDVSRKMAEGDRLLRLQQAAELYLMQVVEAHTFVGIVTFDSKGEIRASLQQIYSDDDRKLLVSYLPTAVSTDAETNICAGVKKGFEVVEERNGRADGSVLILVTSGADEHIANCLLTSMNSGSTIHSMALGSSAARKVGELSRLTGGLKFFIPDKFTSNGMTEAFVRISSGTGDIFQQSLQVESVCETVQPQHQLADTMTVDSAVGNDTLFLVTWQTGGPPEIALLDPSGRKYNTGDFIINLAFRTASLKIPGTAKHGHWTYTLNNTHHSPQALKVTVASRASSLAMSPATLEAFVERDSTYFPQPVIIYANVRKGLHPILNATVVATVEPEAGDPVVLQLLDGGAGADVIRNDGIYSRYFSSFAVSGSYSLTVHVRHSPSTSTLALPVPGNHAMYVPGYITNDNIQMNAPKNLGHRPVKERWGFSRVSSGGSFSVLGVPDGPHPDMFPPCKITDLEAMKVEDDVVLSWTAPGEDFDQGQTTSYEIRMSRSLWNIRDDFDNAILVNSSELVPQHAGTRETFTFSPKLVTHELDHELAEDAQEPYIVYVALRAMDRSSLRSAVSNIALVSMSLPPNSSPVVSRDDLILKGVLTTVGLIAILCLIMVVAHCIFNRKKRPSRKENETKFL.

The N-terminal stretch at 1–32 (MTHRDSTGPVIGLKLVTLLFTLSPELLFLGAG) is a signal peptide. Residues 33–905 (LKLKENGYDG…SRDDLILKGV (873 aa)) are Extracellular-facing. A metalloprotease domain region spans residues 54–205 (DLKLITNIKE…CSSDITGVFV (152 aa)). Asn74 and Asn97 each carry an N-linked (GlcNAc...) asparagine glycan. His164 is a Zn(2+) binding site. Residue Glu165 is part of the active site. Zn(2+) contacts are provided by His168 and Asp175. 4 N-linked (GlcNAc...) asparagine glycosylation sites follow: Asn231, Asn235, Asn254, and Asn286. Residues 311-483 (VVCLVIDVSR…NGMTEAFVRI (173 aa)) form the VWFA domain. N-linked (GlcNAc...) asparagine glycosylation is found at Asn522, Asn580, Asn637, and Asn821. A helical transmembrane segment spans residues 906 to 926 (LTTVGLIAILCLIMVVAHCIF). Residues 927-942 (NRKKRPSRKENETKFL) are Cytoplasmic-facing.

Belongs to the CLCR family. In terms of processing, the translation product is autoproteolytically cleaved by the metalloprotease domain in the endoplasmic reticulum into a N-terminal and a C-terminal products that remain physically associated with each other. The cleavage is necessary for calcium-activated chloride channel (CaCC) activation activity. N-glycosylated. Highly expressed in eye, spleen, lung, kidney, uterus, and endothelial cells. Weakly expressed in heart and throughout the gastrointestinal tract. Highly expressed in mammary cell lines. Its expression in immortalized cell line HC11 correlates with slow or arrested growth. Re-expression in mammary tumor cells reduces colony survival.

It localises to the cell membrane. It is found in the basal cell membrane. The protein localises to the cell junction. Plays a role in modulating chloride current across the plasma membrane in a calcium-dependent manner, and cell adhesion. Involved in basal cell adhesion and/or stratification of squamous epithelia. May act as a tumor suppressor in breast and colorectal cancer. Plays a key role for cell adhesion in the beginning stages of lung metastasis via the binding to ITGB4. In Mus musculus (Mouse), this protein is Calcium-activated chloride channel regulator 2 (Clca2).